A 562-amino-acid chain; its full sequence is Protein FAM222B (562 aa).

Composition is skewed to low complexity over residues 147–167 and 183–201; these read PQAQALARQQALQHAQTLAHA and ALSHPQSLQQPQGLGHPQQ. 2 disordered regions span residues 147–242 and 537–562; these read PQAQ…PPNV and AHRAPGTRAPDPTDSRSLHIQHPGYR.

This sequence belongs to the FAM222 family.

In Mus musculus (Mouse), this protein is Protein FAM222B (Fam222b).